The primary structure comprises 322 residues: MRILAILLPILISFFISYITTVWVIRQAKKSRFVGKDINKPDKPEIPLLGGIGIIAGFIAGSFSLLLTDVRSERVIPAVILSSLLIAFLGLLDDIFNVRQSVRAFLPIFASVPLIVYSVGHSIISIPFLGPINFGIFYYIIIIPFALTITSNAFNMLEGLNGLGVGMGIIMLSALAYIGLTHTGPTYQAGLIALSAIFSLSAFLIFNKYPAKIFPGNVGTYFIGALIGAIGIAGFMYTALAILYIPYVVEFILKLRTNFKGVSFGKVDSSGRLYWDEKPHSLTHIVMKMGRFKEYQVVIILWGMEAIFAVIAVILQTTTIVI.

The next 9 helical transmembrane spans lie at 5–25 (AILLPILISFFISYITTVWVI), 46–66 (IPLLGGIGIIAGFIAGSFSLL), 76–96 (IPAVILSSLLIAFLGLLDDIF), 102–122 (VRAFLPIFASVPLIVYSVGHS), 123–143 (IISIPFLGPINFGIFYYIIII), 160–180 (LNGLGVGMGIIMLSALAYIGL), 186–206 (TYQAGLIALSAIFSLSAFLIF), 222–242 (FIGALIGAIGIAGFMYTALAI), and 295–315 (YQVVIILWGMEAIFAVIAVIL).

The protein belongs to the glycosyltransferase 4 family.

The protein localises to the cell membrane. The catalysed reaction is a di-trans,poly-cis-dolichyl phosphate + UDP-N-acetyl-alpha-D-glucosamine = an N-acetyl-alpha-D-glucosaminyl-diphospho-di-trans,poly-cis-dolichol + UMP. With respect to regulation, inhibited by tunicamycin. This chain is Putative UDP-N-acetylglucosamine--dolichyl-phosphate N-acetylglucosaminephosphotransferase (gnpTA), found in Saccharolobus solfataricus (strain ATCC 35092 / DSM 1617 / JCM 11322 / P2) (Sulfolobus solfataricus).